Consider the following 490-residue polypeptide: Protein LMBR1L (490 aa).

The Extracellular portion of the chain corresponds to 1–21; that stretch reads MEAPDYEVLSVREQLFHERIR. Positions 1 to 59 are interaction with LGB; it reads MEAPDYEVLSVREQLFHERIRECIISTLLFATLYILCHIFLTRFKKPAEFTTVDDEDAT. Residues 1 to 76 form an LCN1-binding region; the sequence is MEAPDYEVLS…LCTFTLAIAL (76 aa). A helical transmembrane segment spans residues 22–42; that stretch reads ECIISTLLFATLYILCHIFLT. The Cytoplasmic portion of the chain corresponds to 43–66; it reads RFKKPAEFTTVDDEDATVNKIALE. A helical membrane pass occupies residues 67-87; it reads LCTFTLAIALGAVLLLPFSII. Residues 88–114 are Extracellular-facing; it reads SNEVLLSLPRNYYIQWLNGSLIHGLWN. Residues 115–135 traverse the membrane as a helical segment; sequence LVFLFSNLSLIFLMPFAYFFT. Residues 136-154 lie on the Cytoplasmic side of the membrane; the sequence is ESEGFAGSRRGVLGRVYET. A helical transmembrane segment spans residues 155–175; that stretch reads VVMLMLLTLLVLGMVWVASAI. Residues 176-196 are Extracellular-facing; sequence LDNNKASRESLYDFWEYYLPY. A helical transmembrane segment spans residues 197 to 217; sequence LYSCISFLGVLLLLVCTPLGL. Over 218 to 305 the chain is Cytoplasmic; sequence ARMFSVTGKL…NLGYPLAMLC (88 aa). A helical transmembrane segment spans residues 306 to 326; the sequence is LLVLTGLSVLIVAIHILELLI. Residues 327-350 lie on the Extracellular side of the membrane; it reads DEAAMPRGMQDASLGQVSFSRLGS. Residues 351–371 form a helical membrane-spanning segment; sequence FGAVIQVALIFYLMVSSVVGF. The Cytoplasmic portion of the chain corresponds to 372–388; the sequence is YSSPLFRSLRPRWHDTA. The helical transmembrane segment at 389-409 threads the bilayer; the sequence is MTQIIGNCVCLLVLSSALPVF. At 410 to 431 the chain is on the extracellular side; it reads SRTLGLTRFDLLGDFGRFNWLG. Residues 432-452 form a helical membrane-spanning segment; sequence NFYIVFLYNAAFAGLTTLCLV. Topologically, residues 453–490 are cytoplasmic; that stretch reads KTFTAAVRAELIRAFGLDRLPLPVSGFPPRASRKTQHQ.

It belongs to the LIMR family. Dimer. Can also form higher oligomers. Interacts with LCN1; this interaction mediates the endocytosis of LCN1. Interacts with UBAC2, FAF2, VCP, AMFR, ZNRF3, CTNNB1, LRP6, GSK3A, GSK3B, FZD6, DVL2 and RNF43. Interaction with LGB and SCGB1A1 is controversial.

It is found in the cell membrane. The protein resides in the endoplasmic reticulum membrane. Functionally, plays an essential role in lymphocyte development by negatively regulating the canonical Wnt signaling pathway. In association with UBAC2 and E3 ubiquitin-protein ligase AMFR, promotes the ubiquitin-mediated degradation of CTNNB1 and Wnt receptors FZD6 and LRP6. LMBR1L stabilizes the beta-catenin destruction complex that is required for regulating CTNNB1 levels. Acts as a LCN1 receptor and can mediate its endocytosis. The protein is Protein LMBR1L (LMBR1L) of Pongo abelii (Sumatran orangutan).